Reading from the N-terminus, the 228-residue chain is MNIFNPNHDRKAIVIFSGGQDSTTCLFQAIAEYGKENIEAITFQYGQRHAIELEKARTIAQDLGIKQTLIDTSVMKAITHNALMDEQAHIEQKENELPNTFVDGRNALFLLYAAIYAKGQGIQDIITGVCETDFSGYPDCRDVFIKSMNVTLNLAMDYPIPISKTPLMYLTKAQTWQLADELGVLDYVQKHTHTCYEGIEGGCRKCPSCILRNKGLKKYLTQKGRKNV.

16–26 (FSGGQDSTTCL) serves as a coordination point for ATP. Positions 195, 203, 206, and 209 each coordinate Zn(2+).

The protein belongs to the QueC family. Zn(2+) serves as cofactor.

The catalysed reaction is 7-carboxy-7-deazaguanine + NH4(+) + ATP = 7-cyano-7-deazaguanine + ADP + phosphate + H2O + H(+). It functions in the pathway purine metabolism; 7-cyano-7-deazaguanine biosynthesis. In terms of biological role, catalyzes the ATP-dependent conversion of 7-carboxy-7-deazaguanine (CDG) to 7-cyano-7-deazaguanine (preQ(0)). The sequence is that of 7-cyano-7-deazaguanine synthase from Haemophilus influenzae (strain ATCC 51907 / DSM 11121 / KW20 / Rd).